The sequence spans 859 residues: Envelope glycoprotein (859 aa).

Positions 1–6 are excised as a propeptide; the sequence is MVSIAF. The Extracellular segment spans residues 7–614; the sequence is YGGIPGGIST…KDLWSHIGNW (608 aa). N-linked (GlcNAc...) asparagine; by host glycans are attached at residues N40, N112, N141, N148, N186, N214, N233, N244, N313, N340, N368, N399, N406, and N411. Residues 446–466 form a fusion peptide region; the sequence is FGISAIVAAIVAATAIAASAT. N-linked (GlcNAc...) asparagine; by host glycans are attached at residues N483 and N490. Residues 498–513 form an immunosuppression region; that stretch reads LIERQIKILYAMILQT. N-linked (GlcNAc...) asparagine; by host glycosylation is found at N550 and N557. Coiled coils occupy residues 576-624 and 663-699; these read ILTT…SIIK and KKFH…YYKQ. Residues 615–635 form a helical membrane-spanning segment; the sequence is IPGLGASIIKYIVMFLLIYLL. At 636 to 859 the chain is on the cytoplasmic side; it reads LTSSPKILRA…TSHVSMPQYV (224 aa).

In terms of assembly, the mature envelope protein (Env) consists of a trimer of SU-TM heterodimers attached by noncovalent interactions or by a labile interchain disulfide bond. Post-translationally, specific enzymatic cleavages in vivo yield mature proteins. Envelope glycoproteins are synthesized as an inactive precursor that is N-glycosylated and processed likely by host cell furin or by a furin-like protease in the Golgi to yield the mature SU and TM proteins. The cleavage site between SU and TM requires the minimal sequence [KR]-X-[KR]-R.

The protein resides in the virion membrane. It localises to the host cell membrane. The surface protein (SU) attaches the virus to the host cell by binding to its receptor. This interaction triggers the refolding of the transmembrane protein (TM) and is thought to activate its fusogenic potential by unmasking its fusion peptide. Fusion occurs at the host cell plasma membrane. Its function is as follows. The transmembrane protein (TM) acts as a class I viral fusion protein. Under the current model, the protein has at least 3 conformational states: pre-fusion native state, pre-hairpin intermediate state, and post-fusion hairpin state. During viral and target cell membrane fusion, the coiled coil regions (heptad repeats) assume a trimer-of-hairpins structure, positioning the fusion peptide in close proximity to the C-terminal region of the ectodomain. The formation of this structure appears to drive apposition and subsequent fusion of viral and target cell membranes. Membranes fusion leads to delivery of the nucleocapsid into the cytoplasm. The protein is Envelope glycoprotein (env) of Equus asinus (Donkey).